The sequence spans 630 residues: Golgi apyrase (630 aa).

The Lumenal portion of the chain corresponds to Met1–Lys500. The active-site Proton acceptor is the Glu152. A helical transmembrane segment spans residues Gly501–Phe517. Over His518–Asp630 the chain is Cytoplasmic. A disordered region spans residues Ser586–Leu606.

The protein belongs to the GDA1/CD39 NTPase family. Interacts with activator subunit VMA13 of vacuolar H(+)-ATPase. Interacts with CDC55; this interaction is disrupted by adenovirus E4orf4, which remains associated with both YND1 and CDC55. Requires Ca(2+) as cofactor. It depends on Mg(2+) as a cofactor. The cofactor is Mn(2+).

The protein localises to the golgi apparatus. The protein resides in the membrane. The enzyme catalyses a ribonucleoside 5'-triphosphate + 2 H2O = a ribonucleoside 5'-phosphate + 2 phosphate + 2 H(+). The protein operates within protein modification; protein glycosylation. Its activity is regulated as follows. Activity is inhibited both by interaction with VMA13 and by V-ATPase acidification of the lumen. The activity of VMA13 is not required for YND1 inhibition. Catalyzes the hydrolysis of phosphoanhydride bonds of nucleoside tri- and di-phosphates. Has equal high activity toward ADP/ATP, GDP/GTP, and UDP/UTP and approximately 50% less toward CDP/CTP and thiamine pyrophosphate. Has no activity toward GMP. Required for Golgi glycosylation and cell wall integrity. Together with CDC55, required for adenovirus E4orf4 (early region 4 open reading frame 4) induced toxicity, the apyrase activity is not required for this function. Plays a role in sphingolipid synthesis. The sequence is that of Golgi apyrase (YND1) from Saccharomyces cerevisiae (strain ATCC 204508 / S288c) (Baker's yeast).